A 226-amino-acid polypeptide reads, in one-letter code: ATP-dependent dethiobiotin synthetase BioD (226 aa).

ATP is bound at residue 13 to 18; the sequence is DVGKTL. T17 is a binding site for Mg(2+). K38 is a catalytic residue. ATP is bound by residues D55, 117 to 120, 177 to 178, 206 to 208, and E213; these read EGAG, NR, and PFV. 2 residues coordinate Mg(2+): D55 and E117.

The protein belongs to the dethiobiotin synthetase family. As to quaternary structure, homodimer. Mg(2+) is required as a cofactor.

Its subcellular location is the cytoplasm. The enzyme catalyses (7R,8S)-7,8-diammoniononanoate + CO2 + ATP = (4R,5S)-dethiobiotin + ADP + phosphate + 3 H(+). Its pathway is cofactor biosynthesis; biotin biosynthesis; biotin from 7,8-diaminononanoate: step 1/2. Functionally, catalyzes a mechanistically unusual reaction, the ATP-dependent insertion of CO2 between the N7 and N8 nitrogen atoms of 7,8-diaminopelargonic acid (DAPA, also called 7,8-diammoniononanoate) to form a ureido ring. The polypeptide is ATP-dependent dethiobiotin synthetase BioD (Aeromonas hydrophila subsp. hydrophila (strain ATCC 7966 / DSM 30187 / BCRC 13018 / CCUG 14551 / JCM 1027 / KCTC 2358 / NCIMB 9240 / NCTC 8049)).